Consider the following 459-residue polypeptide: MDRFKMIKEVGDGTFGSVWRAINKQNGEVVAVKKMKRKYYSFEECMSLREVKSLRRMNHPNIVKLKEVIRENDILYFIMEYMECNLYQLMKDRVKPFSEAEVRNWCFQIFQALAYMHQRGYFHRDLKPENLLVSKDVIKLADFGLAREVTSVPPYTEYVSTRWYRAPEVLLQSSIYDSAVDMWAMGAIMAELLTLHPLFPGTSEADEILKICNVIGSPDEQSWPQGLSLAETMKFQFPQVSGNQLAEVMTSVSSEAVDLISSLCSWDPCKRPKAAEVLQHTFFQGCTFVPPTVRSKAGVLPKTPPCVGVKGVSEHGMPRRYSTGTLSTTKPHSNASLKSSGLSKTGVQRKLQMDRQAPQKIKKPTESNNKLTTNRVPARNSPGHPVLRHSRSLPETGRATMHKVSTLTERLTHMSVTSRTRTTPKPAAPLLKAGLGKSDLLGKTDEIPPAKRLTRKLVS.

One can recognise a Protein kinase domain in the interval 4–283; sequence FKMIKEVGDG…AAEVLQHTFF (280 aa). ATP-binding positions include 10–18 and K33; that span reads VGDGTFGSV. D125 functions as the Proton acceptor in the catalytic mechanism. Residue S151 is modified to Phosphoserine. Residue T156 is modified to Phosphothreonine. A disordered region spans residues 310–397; sequence KGVSEHGMPR…RHSRSLPETG (88 aa). Polar residues-rich tracts occupy residues 322–346 and 366–375; these read STGT…SKTG and ESNNKLTTNR.

Belongs to the protein kinase superfamily. CMGC Ser/Thr protein kinase family. CDC2/CDKX subfamily.

The catalysed reaction is L-seryl-[protein] + ATP = O-phospho-L-seryl-[protein] + ADP + H(+). It carries out the reaction L-threonyl-[protein] + ATP = O-phospho-L-threonyl-[protein] + ADP + H(+). The enzyme catalyses [DNA-directed RNA polymerase] + ATP = phospho-[DNA-directed RNA polymerase] + ADP + H(+). This chain is Cyclin-dependent kinase F-4 (CDKF-4), found in Oryza sativa subsp. japonica (Rice).